The primary structure comprises 215 residues: Octanoyltransferase (215 aa).

A BPL/LPL catalytic domain is found at 31–206; sequence PDSQDEIWLV…QLVKHLDYAE (176 aa). Substrate is bound by residues 70-77, 137-139, and 150-152; these read RGGQVTYH, SLG, and GLA. The Acyl-thioester intermediate role is filled by Cys168.

Belongs to the LipB family.

The protein localises to the cytoplasm. The catalysed reaction is octanoyl-[ACP] + L-lysyl-[protein] = N(6)-octanoyl-L-lysyl-[protein] + holo-[ACP] + H(+). It participates in protein modification; protein lipoylation via endogenous pathway; protein N(6)-(lipoyl)lysine from octanoyl-[acyl-carrier-protein]: step 1/2. Functionally, catalyzes the transfer of endogenously produced octanoic acid from octanoyl-acyl-carrier-protein onto the lipoyl domains of lipoate-dependent enzymes. Lipoyl-ACP can also act as a substrate although octanoyl-ACP is likely to be the physiological substrate. The sequence is that of Octanoyltransferase from Pseudomonas putida (strain GB-1).